The chain runs to 183 residues: NAD(P)H-quinone oxidoreductase subunit I, chloroplastic (183 aa).

4Fe-4S ferredoxin-type domains follow at residues 55–84 and 95–124; these read GRIH…VDWE and TSYS…MTEE. Residues Cys64, Cys67, Cys70, Cys74, Cys104, Cys107, Cys110, and Cys114 each contribute to the [4Fe-4S] cluster site.

Belongs to the complex I 23 kDa subunit family. In terms of assembly, NDH is composed of at least 16 different subunits, 5 of which are encoded in the nucleus. [4Fe-4S] cluster is required as a cofactor.

It is found in the plastid. Its subcellular location is the chloroplast thylakoid membrane. The enzyme catalyses a plastoquinone + NADH + (n+1) H(+)(in) = a plastoquinol + NAD(+) + n H(+)(out). It catalyses the reaction a plastoquinone + NADPH + (n+1) H(+)(in) = a plastoquinol + NADP(+) + n H(+)(out). NDH shuttles electrons from NAD(P)H:plastoquinone, via FMN and iron-sulfur (Fe-S) centers, to quinones in the photosynthetic chain and possibly in a chloroplast respiratory chain. The immediate electron acceptor for the enzyme in this species is believed to be plastoquinone. Couples the redox reaction to proton translocation, and thus conserves the redox energy in a proton gradient. This chain is NAD(P)H-quinone oxidoreductase subunit I, chloroplastic, found in Huperzia lucidula (Shining clubmoss).